A 126-amino-acid chain; its full sequence is FCS-Like Zinc finger 7 (126 aa).

The FLZ-type zinc finger occupies 72–116 (SFLVNCGFCKRGLAPGRDIYMYKGDAAFCSIECREQQMEHDEGKT).

Belongs to the FLZ family. As to quaternary structure, interacts with KIN10 and KIN11 via its FLZ-type zinc finger domain. Interacts with KINB3 via its N-terminal part. Forms homodimer and heterodimer with FLZ1, FLZ2 and FLZ15 in vitro.

The protein resides in the cytoplasm. Its subcellular location is the nucleus. In terms of biological role, may act as an adapter to facilitate the interaction of SnRK1 complex with effector proteins, conferring tissue- and stimulus-type specific differences in the SnRK1 regulation pathway. In Arabidopsis thaliana (Mouse-ear cress), this protein is FCS-Like Zinc finger 7.